Here is a 274-residue protein sequence, read N- to C-terminus: Triosephosphate isomerase (274 aa).

31–33 (NWK) is a binding site for substrate. The active-site Electrophile is His118. Glu188 (proton acceptor) is an active-site residue. Residues Gly194, Ser234, and 255–256 (GG) contribute to the substrate site.

The protein belongs to the triosephosphate isomerase family. In terms of assembly, homodimer.

It localises to the cytoplasm. It carries out the reaction D-glyceraldehyde 3-phosphate = dihydroxyacetone phosphate. The protein operates within carbohydrate biosynthesis; gluconeogenesis. It functions in the pathway carbohydrate degradation; glycolysis; D-glyceraldehyde 3-phosphate from glycerone phosphate: step 1/1. In terms of biological role, involved in the gluconeogenesis. Catalyzes stereospecifically the conversion of dihydroxyacetone phosphate (DHAP) to D-glyceraldehyde-3-phosphate (G3P). This is Triosephosphate isomerase from Chlamydia trachomatis serovar A (strain ATCC VR-571B / DSM 19440 / HAR-13).